Here is a 529-residue protein sequence, read N- to C-terminus: Heat shock factor protein 1 (529 aa).

An N-acetylmethionine modification is found at Met-1. The DNA-binding domain stretch occupies residues 15–120; sequence VPAFLTKLWT…LLENIKRKVT (106 aa). The residue at position 80 (Lys-80) is an N6-acetyllysine. Lys-91 carries the N6-acetyllysine; alternate modification. A Glycyl lysine isopeptide (Lys-Gly) (interchain with G-Cter in SUMO2); alternate cross-link involves residue Lys-91. An N6-acetyllysine modification is found at Lys-118. Ser-121 is subject to Phosphoserine; by MAPKAPK2. Glycyl lysine isopeptide (Lys-Gly) (interchain with G-Cter in SUMO2) cross-links involve residues Lys-126 and Lys-131. Residues 130 to 203 form a hydrophobic repeat HR-A/B region; sequence IKIRQDSVTK…ISLVQSNRIL (74 aa). Thr-142 carries the post-translational modification Phosphothreonine; by CK2. N6-acetyllysine is present on residues Lys-150 and Lys-188. The interval 203–224 is d domain; that stretch reads LGVKRKIPLMLNDSGSAHSMPK. Lys-208 bears the N6-acetyllysine; alternate mark. A Glycyl lysine isopeptide (Lys-Gly) (interchain with G-Cter in SUMO2); alternate cross-link involves residue Lys-208. Residue Ser-216 is modified to Phosphoserine; by PLK1. The tract at residues 221–310 is regulatory domain; that stretch reads SMPKYSRQFS…PPSPPQSPRV (90 aa). Lys-224 participates in a covalent cross-link: Glycyl lysine isopeptide (Lys-Gly) (interchain with G-Cter in SUMO2). Ser-230 carries the phosphoserine; by CAMK2A modification. A phosphoserine mark is found at Ser-275 and Ser-292. Residues 295 to 324 are disordered; that stretch reads VRVKEEPPSPPQSPRVEEASPGRPSSVDTL. The residue at position 298 (Lys-298) is an N6-acetyllysine; alternate. A Glycyl lysine isopeptide (Lys-Gly) (interchain with G-Cter in SUMO2); alternate cross-link involves residue Lys-298. Lys-298 participates in a covalent cross-link: Glycyl lysine isopeptide (Lys-Gly) (interchain with G-Cter in SUMO); alternate. Ser-303 carries the post-translational modification Phosphoserine; by GSK3-beta. Residue Ser-307 is modified to Phosphoserine; by MAPK3. Ser-314 and Ser-319 each carry phosphoserine. Ser-320 carries the phosphoserine; by PKA modification. Thr-323 is subject to Phosphothreonine. At Ser-326 the chain carries Phosphoserine; by MAPK12. The interval 336–372 is disordered; the sequence is RESEPAPASVTALTDARGHTDTEGRPPSPPPTSTPEK. Ser-344 is modified (phosphoserine). Residue Ser-363 is modified to Phosphoserine; by MAPK8. Residues 371–529 form a transactivation domain region; that stretch reads EKCLSVACLD…PPKAKDPTVS (159 aa). Residues 384 to 409 form a hydrophobic repeat HR-C region; sequence LSDHLDAMDSNLDNLQTMLSSHGFSV. Positions 412 to 420 match the 9aaTAD motif; that stretch reads SALLDLFSP. Position 419 is a phosphoserine; by PLK1 (Ser-419). A Phosphoserine modification is found at Ser-444. 2 disordered regions span residues 444–463 and 502–529; these read SPQEPPRPPEAENSSPDSGK and EGDGFAEDPTISLLTGSEPPKAKDPTVS. At Lys-524 the chain carries N6-acetyllysine.

Belongs to the HSF family. In terms of assembly, monomer; cytoplasmic latent and transcriptionally inactive monomeric form in unstressed cells. Homotrimer; in response to stress, such as heat shock, homotrimerizes and translocates into the nucleus, binds to heat shock element (HSE) sequences in promoter of heat shock protein (HSP) genes and acquires transcriptional ability. Interacts (via monomeric form) with FKBP4; this interaction occurs in unstressed cells. Associates (via monomeric form) with HSP90 proteins in a multichaperone complex in unnstressed cell; this association maintains HSF1 in a non-DNA-binding and transcriptional inactive form by preventing HSF1 homotrimerization. Homotrimeric transactivation activity is modulated by protein-protein interactions and post-translational modifications. Interacts with HSP90AA1; this interaction is decreased in a IER5-dependent manner, promoting HSF1 accumulation in the nucleus, homotrimerization and DNA-binding activities. Part (via regulatory domain in the homotrimeric form) of a large heat shock-induced HSP90-dependent multichaperone complex at least composed of FKBP4, FKBP5, HSP90 proteins, PPID, PPP5C and PTGES3; this association maintains the HSF1 homotrimeric DNA-bound form in a transcriptionally inactive form. Interacts with BAG3 (via BAG domain); this interaction occurs in normal and heat-shocked cells promoting nuclear shuttling of HSF1 in a BAG3-dependent manner. Interacts (via homotrimeric and hyperphosphorylated form) with FKBP4; this interaction occurs upon heat shock in a HSP90-dependent multichaperone complex. Interacts (via homotrimeric form preferentially) with EEF1A proteins. In heat shocked cells, stress-denatured proteins compete with HSF1 homotrimeric DNA-bound form for association of the HSP90-dependent multichaperone complex, and hence alleviating repression of HSF1-mediated transcriptional activity. Interacts (via homotrimeric form preferentially) with DAXX; this interaction relieves homotrimeric HSF1 from repression of its transcriptional activity by HSP90-dependent multichaperone complex upon heat shock. Interacts (via D domain and preferentially with hyperphosphorylated form) with JNK1; this interaction occurs under both normal growth conditions and immediately upon heat shock. Interacts (via D domain and preferentially with hyperphosphorylated form) with MAPK3; this interaction occurs upon heat shock. Interacts with IER5 (via central region); this interaction promotes PPP2CA-induced dephosphorylation on Ser-121, Ser-307, Ser-314, Thr-323 and Thr-367 and HSF1 transactivation activity. Found in a ribonucleoprotein complex composed of the HSF1 homotrimeric form, translation elongation factor eEF1A proteins and non-coding RNA heat shock RNA-1 (HSR1); this complex occurs upon heat shock and stimulates HSF1 DNA-binding activity. Interacts (via transactivation domain) with HSPA1A/HSP70 and DNAJB1; these interactions result in the inhibition of heat shock- and HSF1-induced transcriptional activity during the attenuation and recovery phase from heat shock. Interacts (via Ser-303 and Ser-307 phosphorylated form) with YWHAE; this interaction promotes HSF1 sequestration in the cytoplasm in an ERK-dependent manner. Found in a complex with IER5 and PPP2CA. Interacts with TPR; this interaction increases upon heat shock and stimulates export of HSP70 mRNA. Interacts with SYMPK (via N-terminus) and CSTF2; these interactions occur upon heat shock. Interacts (via transactivation domain) with HSPA8. Interacts with EEF1D; this interaction occurs at heat shock promoter element (HSE) sequences. Interacts with MAPKAPK2. Interacts with PRKACA/PKA. Interacts (via transactivation domain) with GTF2A2. Interacts (via transactivation domain) with GTF2B. Interacts (via transactivation domain) with TBP. Interacts with CDK9, CCNT1 and EP300. Interacts (via N-terminus) with XRCC5 (via N-terminus) and XRCC6 (via N-terminus); these interactions are direct and prevent XRCC5/XRCC6 heterodimeric binding and non-homologous end joining (NHEJ) repair activities induced by ionizing radiation (IR). Interacts with PLK1; this interaction occurs during the early mitotic period, increases upon heat shock but does not modulate neither HSF1 homotrimerization and DNA-binding activities. Interacts (via Ser-216 phosphorylated form) with CDC20; this interaction occurs in mitosis in a MAD2L1-dependent manner and prevents PLK1-stimulated degradation of HSF1 by blocking the recruitment of the SCF(BTRC) ubiquitin ligase complex. Interacts with MAD2L1; this interaction occurs in mitosis. Interacts with BTRC; this interaction occurs during mitosis, induces its ubiquitin-dependent degradation following stimulus-dependent phosphorylation at Ser-216, a process inhibited by CDC20. Interacts with HSP90AA1 and HSP90AB1. Forms a complex with TTC5/STRAP and p300/EP300; these interactions augment chromatin-bound HSF1 and p300/EP300 histone acetyltransferase activity. Post-translationally, phosphorylated. Phosphorylated in unstressed cells; this phosphorylation is constitutive and implicated in the repression of HSF1 transcriptional activity. Phosphorylated on Ser-121 by MAPKAPK2; this phosphorylation promotes interaction with HSP90 proteins and inhibits HSF1 homotrimerization, DNA-binding and transactivation activities. Phosphorylation on Ser-303 by GSK3B/GSK3-beta and on Ser-307 by MAPK3 within the regulatory domain is involved in the repression of HSF1 transcriptional activity and occurs in a RAF1-dependent manner. Phosphorylation on Ser-303 and Ser-307 increases HSF1 nuclear export in a YWHAE- and XPO1/CRM1-dependent manner. Phosphorylation on Ser-307 is a prerequisite for phosphorylation on Ser-303. According to PubMed:9535852, Ser-303 is not phosphorylated in unstressed cells. Phosphorylated on Ser-419 by PLK1; phosphorylation promotes nuclear translocation upon heat shock. Hyperphosphorylated upon heat shock and during the attenuation and recovery phase period of the heat shock response. Phosphorylated on Thr-142; this phosphorylation increases HSF1 transactivation activity upon heat shock. Phosphorylation on Ser-230 by CAMK2A; this phosphorylation enhances HSF1 transactivation activity upon heat shock. Phosphorylation on Ser-326 by MAPK12; this phosphorylation enhances HSF1 nuclear translocation, homotrimerization and transactivation activities upon heat shock. Phosphorylated on Ser-320 by PRKACA/PKA; this phosphorylation promotes nuclear localization and transcriptional activity upon heat shock. Phosphorylated on Ser-363 by MAPK8; this phosphorylation occurs upon heat shock, induces HSF1 translocation into nuclear stress bodies and negatively regulates transactivation activity. Neither basal nor stress-inducible phosphorylation on Ser-230, Ser-292, Ser-303, Ser-307, Ser-314, Ser-319, Ser-320, Thr-323, Ser-326, Ser-338, Ser-344, Ser-363, Thr-367, Ser-368 and Thr-369 within the regulatory domain is involved in the regulation of HSF1 subcellular localization or DNA-binding activity; however, it negatively regulates HSF1 transactivation activity. Phosphorylated on Ser-216 by PLK1 in the early mitotic period; this phosphorylation regulates HSF1 localization to the spindle pole, the recruitment of the SCF(BTRC) ubiquitin ligase complex inducing HSF1 degradation, and hence mitotic progression. Dephosphorylated on Ser-121, Ser-307, Ser-314, Thr-323 and Thr-367 by phosphatase PPP2CA in an IER5-dependent manner, leading to HSF1-mediated transactivation activity. Sumoylated with SUMO1 and SUMO2 upon heat shock in a ERK2-dependent manner. Sumoylated by SUMO1 on Lys-298; sumoylation occurs upon heat shock and promotes its localization to nuclear stress bodies and DNA-binding activity. Phosphorylation on Ser-303 and Ser-307 is probably a prerequisite for sumoylation. In terms of processing, acetylated on Lys-118; this acetylation is decreased in a IER5-dependent manner. Acetylated on Lys-118, Lys-208 and Lys-298; these acetylations occur in a EP300-dependent manner. Acetylated on Lys-80; this acetylation inhibits DNA-binding activity upon heat shock. Deacetylated on Lys-80 by SIRT1; this deacetylation increases DNA-binding activity. Post-translationally, ubiquitinated by SCF(BTRC) and degraded following stimulus-dependent phosphorylation at Ser-216 by PLK1 in mitosis. Polyubiquitinated. Undergoes proteasomal degradation upon heat shock and during the attenuation and recovery phase period of the heat shock response.

The protein resides in the nucleus. The protein localises to the cytoplasm. It is found in the nucleoplasm. Its subcellular location is the perinuclear region. It localises to the cytoskeleton. The protein resides in the spindle pole. The protein localises to the microtubule organizing center. It is found in the centrosome. Its subcellular location is the chromosome. It localises to the centromere. The protein resides in the kinetochore. Functionally, functions as a stress-inducible and DNA-binding transcription factor that plays a central role in the transcriptional activation of the heat shock response (HSR), leading to the expression of a large class of molecular chaperones, heat shock proteins (HSPs), that protect cells from cellular insult damage. In unstressed cells, is present in a HSP90-containing multichaperone complex that maintains it in a non-DNA-binding inactivated monomeric form. Upon exposure to heat and other stress stimuli, undergoes homotrimerization and activates HSP gene transcription through binding to site-specific heat shock elements (HSEs) present in the promoter regions of HSP genes. Upon heat shock stress, forms a chromatin-associated complex with TTC5/STRAP and p300/EP300 to stimulate HSR transcription, therefore increasing cell survival. Activation is reversible, and during the attenuation and recovery phase period of the HSR, returns to its unactivated form. Binds to inverted 5'-NGAAN-3' pentamer DNA sequences. Binds to chromatin at heat shock gene promoters. Activates transcription of transcription factor FOXR1 which in turn activates transcription of the heat shock chaperones HSPA1A and HSPA6 and the antioxidant NADPH-dependent reductase DHRS2. Also serves several other functions independently of its transcriptional activity. Involved in the repression of Ras-induced transcriptional activation of the c-fos gene in heat-stressed cells. Positively regulates pre-mRNA 3'-end processing and polyadenylation of HSP70 mRNA upon heat-stressed cells in a symplekin (SYMPK)-dependent manner. Plays a role in nuclear export of stress-induced HSP70 mRNA. Plays a role in the regulation of mitotic progression. Also plays a role as a negative regulator of non-homologous end joining (NHEJ) repair activity in a DNA damage-dependent manner. Involved in stress-induced cancer cell proliferation in a IER5-dependent manner. (Microbial infection) Plays a role in latent human immunodeficiency virus (HIV-1) transcriptional reactivation. Binds to the HIV-1 long terminal repeat promoter (LTR) to reactivate viral transcription by recruiting cellular transcriptional elongation factors, such as CDK9, CCNT1 and EP300. The sequence is that of Heat shock factor protein 1 from Homo sapiens (Human).